A 484-amino-acid polypeptide reads, in one-letter code: Adenylyltransferase and sulfurtransferase uba4 (484 aa).

Over residues 39–49 (AKAQSAAATTA) the composition is skewed to low complexity. A disordered region spans residues 39–58 (AKAQSAAATTAGDNHDKPRR). ATP is bound by residues Gly98, Asp119, 126–130 (SNLHR), Lys143, and 187–188 (DN). Residues Cys236 and Cys239 each contribute to the Zn(2+) site. The Glycyl thioester intermediate; for adenylyltransferase activity role is filled by Cys253. Positions 313 and 316 each coordinate Zn(2+). The Rhodanese domain maps to 370–482 (PEKTPTLIDV…WREQVDPEWP (113 aa)). Cys437 (cysteine persulfide intermediate; for sulfurtransferase activity) is an active-site residue.

In the N-terminal section; belongs to the HesA/MoeB/ThiF family. UBA4 subfamily. It depends on Zn(2+) as a cofactor.

It is found in the cytoplasm. It localises to the cytosol. The catalysed reaction is [molybdopterin-synthase sulfur-carrier protein]-C-terminal Gly-Gly + ATP + H(+) = [molybdopterin-synthase sulfur-carrier protein]-C-terminal Gly-Gly-AMP + diphosphate. It catalyses the reaction [molybdopterin-synthase sulfur-carrier protein]-C-terminal Gly-Gly-AMP + S-sulfanyl-L-cysteinyl-[cysteine desulfurase] + AH2 = [molybdopterin-synthase sulfur-carrier protein]-C-terminal-Gly-aminoethanethioate + L-cysteinyl-[cysteine desulfurase] + A + AMP + 2 H(+). Its pathway is tRNA modification; 5-methoxycarbonylmethyl-2-thiouridine-tRNA biosynthesis. It functions in the pathway cofactor biosynthesis; molybdopterin biosynthesis. Plays a central role in 2-thiolation of mcm(5)S(2)U at tRNA wobble positions of cytosolic tRNA(Lys), tRNA(Glu) and tRNA(Gln). Also essential during biosynthesis of the molybdenum cofactor. Acts by mediating the C-terminal thiocarboxylation of sulfur carriers urm1 and mocs2a. Its N-terminus first activates urm1 and mocs2a as acyl-adenylates (-COAMP), then the persulfide sulfur on the catalytic cysteine is transferred to urm1 and mocs2a to form thiocarboxylation (-COSH) of their C-terminus. The reaction probably involves hydrogen sulfide that is generated from the persulfide intermediate and that acts as a nucleophile towards urm1 and mocs2a. Subsequently, a transient disulfide bond is formed. Does not use thiosulfate as sulfur donor; nfs1 probably acting as a sulfur donor for thiocarboxylation reactions. The chain is Adenylyltransferase and sulfurtransferase uba4 from Aspergillus terreus (strain NIH 2624 / FGSC A1156).